Reading from the N-terminus, the 444-residue chain is Probable galactarate/D-glucarate transporter GarP (444 aa).

Residues 1–11 (MILDTVDEKKK) lie on the Cytoplasmic side of the membrane. A helical transmembrane segment spans residues 12 to 32 (GVHTRYLILLIIFIVTAVNYA). Residues 33 to 56 (DRATLSIAGTEVAKELQLSAVSMG) are Periplasmic-facing. Residues 57–77 (YIFSAFGWAYLLMQIPGGWLL) form a helical membrane-spanning segment. The Cytoplasmic segment spans residues 78–89 (DKFGSKKVYTYS). 2 helical membrane passes run 90-110 (LFFW…PLAW) and 111-131 (AGIS…PSFP). Residues 132 to 157 (ANARIVAAWFPTKERGTASAIFNSAQ) are Cytoplasmic-facing. A run of 2 helical transmembrane segments spans residues 158-178 (YFSL…WGWE) and 179-199 (HVFT…IKLI). Residues 200–252 (HNPTDHPRMSAEELKFISENGAVVDMDHKKPGSAAASGPKLHYIKQLLSNRMM) lie on the Cytoplasmic side of the membrane. A helical transmembrane segment spans residues 253-273 (LGVFFGQYFINTITWFFLTWF). Topologically, residues 274–288 (PIYLVQEKGMSILKV) are periplasmic. A helical membrane pass occupies residues 289 to 309 (GLVASIPALCGFAGGVLGGVF). At 310–319 (SDYLIKRGLS) the chain is on the cytoplasmic side. Residues 320–340 (LTLARKLPIVLGMLLASTIIL) traverse the membrane as a helical segment. Residues 341-350 (CNYTNNTTLV) lie on the Periplasmic side of the membrane. The chain crosses the membrane as a helical span at residues 351-371 (VMLMALAFFGKGFGALGWPVI). At 372–385 (SDTAPKEIVGLCGG) the chain is on the cytoplasmic side. A helical transmembrane segment spans residues 386–406 (VFNVFGNVASIVTPLVIGYLV). The Periplasmic portion of the chain corresponds to 407-413 (SELHSFN). A helical membrane pass occupies residues 414–434 (AALVFVGCSALMAMVCYLFVV). Residues 435–444 (GDIKRMELQK) are Cytoplasmic-facing.

It belongs to the major facilitator superfamily. Phthalate permease family.

Its subcellular location is the cell inner membrane. The catalysed reaction is galactarate(in) + H(+)(in) = galactarate(out) + H(+)(out). It carries out the reaction D-glucarate(in) + H(+)(in) = D-glucarate(out) + H(+)(out). It catalyses the reaction (R)-glycerate(in) + H(+)(in) = (R)-glycerate(out) + H(+)(out). Functionally, probably involved in the uptake of galactarate and/or D-glucarate. May also transport D-glycerate. The polypeptide is Probable galactarate/D-glucarate transporter GarP (Escherichia coli (strain K12)).